Reading from the N-terminus, the 409-residue chain is Elongation factor Tu, chloroplastic (409 aa).

The 205-residue stretch at 10-214 folds into the tr-type G domain; sequence KQHVNIGTIG…NVDTYIPTPV (205 aa). Residues 19–26 are G1; that stretch reads GHVDHGKT. 19–26 is a binding site for GTP; the sequence is GHVDHGKT. Mg(2+) is bound at residue T26. Residues 60–64 form a G2 region; sequence GITIN. The tract at residues 81–84 is G3; it reads DCPG. Residues 81–85 and 136–139 each bind GTP; these read DCPGH and NKED. The G4 stretch occupies residues 136–139; it reads NKED. Residues 174–176 are G5; sequence SAL.

It belongs to the TRAFAC class translation factor GTPase superfamily. Classic translation factor GTPase family. EF-Tu/EF-1A subfamily.

The protein resides in the plastid. The protein localises to the chloroplast. It catalyses the reaction GTP + H2O = GDP + phosphate + H(+). Functionally, GTP hydrolase that promotes the GTP-dependent binding of aminoacyl-tRNA to the A-site of ribosomes during protein biosynthesis. The chain is Elongation factor Tu, chloroplastic (tufA) from Tupiella akineta (Green alga).